Reading from the N-terminus, the 145-residue chain is Functional amyloid chaperone FapA (145 aa).

The N-terminal stretch at 1-27 (MRKRDKRLYHLLLVGCVLGSLSLTAQA) is a signal peptide.

This sequence belongs to the FapA family. In terms of assembly, monomer in solution. Interacts with FapC but not FapB in vitro.

Its subcellular location is the periplasm. In terms of biological role, an intrinsically disordered chaperone for fibril amyloid FapC that guards against fibrillation, pro within the periplasm. Upon overexpression of the endogenous six-gene locus (fapA-fapF), cells form large clumps during liquid growth, make large amounts of biofilm and produce relatively unstable amyloid fibrils. In Pseudomonas putida (strain ATCC 700007 / DSM 6899 / JCM 31910 / BCRC 17059 / LMG 24140 / F1), this protein is Functional amyloid chaperone FapA.